The sequence spans 66 residues: MSKKLKGPDGRIPDRLPDGRPAVAWERRWTEGTLPLWLVATAGGIAVIFVLGIFFYGSYQGVGAGG.

The helical transmembrane segment at 36 to 56 (LWLVATAGGIAVIFVLGIFFY) threads the bilayer.

Belongs to the PsbJ family. As to quaternary structure, PSII is composed of 1 copy each of membrane proteins PsbA, PsbB, PsbC, PsbD, PsbE, PsbF, PsbH, PsbI, PsbJ, PsbK, PsbL, PsbM, PsbT, PsbX, PsbY, Psb30/Ycf12, peripheral proteins PsbO, CyanoQ (PsbQ), PsbU, PsbV and a large number of cofactors. It forms dimeric complexes.

Its subcellular location is the cellular thylakoid membrane. Functionally, one of the components of the core complex of photosystem II (PSII). PSII is a light-driven water:plastoquinone oxidoreductase that uses light energy to abstract electrons from H(2)O, generating O(2) and a proton gradient subsequently used for ATP formation. It consists of a core antenna complex that captures photons, and an electron transfer chain that converts photonic excitation into a charge separation. The sequence is that of Photosystem II reaction center protein J from Prochlorococcus marinus (strain MIT 9215).